The sequence spans 402 residues: Argininosuccinate synthase (402 aa).

7–15 (LYSGGLDTS) is a binding site for ATP. An L-citrulline-binding site is contributed by tyrosine 83. An ATP-binding site is contributed by glycine 113. L-aspartate-binding residues include threonine 115, asparagine 119, and aspartate 120. Asparagine 119 contributes to the L-citrulline binding site. Positions 123, 169, 178, 253, and 265 each coordinate L-citrulline.

It belongs to the argininosuccinate synthase family. Type 1 subfamily. As to quaternary structure, homotetramer.

The protein localises to the cytoplasm. It catalyses the reaction L-citrulline + L-aspartate + ATP = 2-(N(omega)-L-arginino)succinate + AMP + diphosphate + H(+). It functions in the pathway amino-acid biosynthesis; L-arginine biosynthesis; L-arginine from L-ornithine and carbamoyl phosphate: step 2/3. In Thermoplasma acidophilum (strain ATCC 25905 / DSM 1728 / JCM 9062 / NBRC 15155 / AMRC-C165), this protein is Argininosuccinate synthase.